A 1191-amino-acid polypeptide reads, in one-letter code: DNA-directed RNA polymerase II subunit RPB2 (1191 aa).

D799 provides a ligand contact to Mg(2+). Residues 842 to 903 (ASTMGMRHGS…RKDHSTSLRH (62 aa)) are disordered. Polar residues predominate over residues 878–891 (TPISQDDAQGQASR). Positions 893-903 (TRKDHSTSLRH) are enriched in basic and acidic residues. Zn(2+) is bound by residues C1123, C1126, C1141, and C1144. The segment at 1123-1144 (CERCGLIAIANLKKNSFECRGC) adopts a C4-type zinc-finger fold.

It belongs to the RNA polymerase beta chain family. Component of the RNA polymerase II (Pol II) complex consisting of 12 subunits.

The protein localises to the nucleus. The catalysed reaction is RNA(n) + a ribonucleoside 5'-triphosphate = RNA(n+1) + diphosphate. Functionally, DNA-dependent RNA polymerase catalyzes the transcription of DNA into RNA using the four ribonucleoside triphosphates as substrates. Second largest component of RNA polymerase II which synthesizes mRNA precursors and many functional non-coding RNAs. Proposed to contribute to the polymerase catalytic activity and forms the polymerase active center together with the largest subunit. Pol II is the central component of the basal RNA polymerase II transcription machinery. It is composed of mobile elements that move relative to each other. RPB2 is part of the core element with the central large cleft, the clamp element that moves to open and close the cleft and the jaws that are thought to grab the incoming DNA template. This chain is DNA-directed RNA polymerase II subunit RPB2 (RPB2), found in Solanum lycopersicum (Tomato).